Reading from the N-terminus, the 514-residue chain is Ribonuclease Y (514 aa).

The helical transmembrane segment at 2 to 22 threads the bilayer; sequence EDLIVAIVVGAFSSAISIFVV. One can recognise a KH domain in the interval 204-268; the sequence is LINNIPLNDE…VATKTIRELL (65 aa). One can recognise an HD domain in the interval 330–423; the sequence is ALAHTLEVAH…VCAADALSAA (94 aa).

This sequence belongs to the RNase Y family.

The protein resides in the cell membrane. In terms of biological role, endoribonuclease that initiates mRNA decay. This Aliarcobacter butzleri (strain RM4018) (Arcobacter butzleri) protein is Ribonuclease Y.